The chain runs to 123 residues: Small ribosomal subunit protein uS12 (123 aa).

Positions 1–27 (MPTIQQLIRKPRQPKIKRSKSMHLQEC) are disordered. Residues 9–21 (RKPRQPKIKRSKS) are compositionally biased toward basic residues. D89 carries the post-translational modification 3-methylthioaspartic acid.

It belongs to the universal ribosomal protein uS12 family. In terms of assembly, part of the 30S ribosomal subunit. Contacts proteins S8 and S17. May interact with IF1 in the 30S initiation complex.

With S4 and S5 plays an important role in translational accuracy. Functionally, interacts with and stabilizes bases of the 16S rRNA that are involved in tRNA selection in the A site and with the mRNA backbone. Located at the interface of the 30S and 50S subunits, it traverses the body of the 30S subunit contacting proteins on the other side and probably holding the rRNA structure together. The combined cluster of proteins S8, S12 and S17 appears to hold together the shoulder and platform of the 30S subunit. This chain is Small ribosomal subunit protein uS12, found in Roseobacter denitrificans (strain ATCC 33942 / OCh 114) (Erythrobacter sp. (strain OCh 114)).